A 361-amino-acid polypeptide reads, in one-letter code: uncharacterized protein (361 aa).

The first 19 residues, 1-19 (MNLVICVLLLSIWKNNCMT), serve as a signal peptide directing secretion. Over 20-47 (TNQTNGSSTTGDKPVESMQTKLNYLRRN) the chain is Extracellular. A glycan (N-linked (GlcNAc...) asparagine) is linked at Asn24. A helical membrane pass occupies residues 48 to 68 (LLILVGIIIMVFVFICFCYLH). The Cytoplasmic portion of the chain corresponds to 69–361 (YNCLSDDASK…QVTSEVTLND (293 aa)). The segment covering 99-113 (AKTASQCSPETQPML) has biased composition (polar residues). 3 disordered regions span residues 99 to 184 (AKTA…KAHK), 209 to 247 (PPQLFKPLYSSHPQNEISPSKPFGPQELAKPPKHFNPKR), and 295 to 316 (QNLHVSSKVKSSSRSFRKLDSR). Over residues 114 to 133 (STADKSSDSSSPERASAQSS) the composition is skewed to low complexity. Positions 141 to 150 (SSLQKPSIPN) are enriched in polar residues. Positions 299–308 (VSSKVKSSSR) are enriched in low complexity.

The protein resides in the membrane. This is an uncharacterized protein from Homo sapiens (Human).